The chain runs to 310 residues: N-acetyl-gamma-glutamyl-phosphate reductase (310 aa).

The active site involves C117.

The protein belongs to the NAGSA dehydrogenase family. Type 2 subfamily.

Its subcellular location is the cytoplasm. It catalyses the reaction N-acetyl-L-glutamate 5-semialdehyde + phosphate + NADP(+) = N-acetyl-L-glutamyl 5-phosphate + NADPH + H(+). It functions in the pathway amino-acid biosynthesis; L-arginine biosynthesis; N(2)-acetyl-L-ornithine from L-glutamate: step 3/4. Functionally, catalyzes the NADPH-dependent reduction of N-acetyl-5-glutamyl phosphate to yield N-acetyl-L-glutamate 5-semialdehyde. The protein is N-acetyl-gamma-glutamyl-phosphate reductase of Brucella suis (strain ATCC 23445 / NCTC 10510).